The sequence spans 124 residues: Nucleoid-associated protein Noca_0318 (124 aa).

Belongs to the YbaB/EbfC family. In terms of assembly, homodimer.

Its subcellular location is the cytoplasm. The protein resides in the nucleoid. Its function is as follows. Binds to DNA and alters its conformation. May be involved in regulation of gene expression, nucleoid organization and DNA protection. This is Nucleoid-associated protein Noca_0318 from Nocardioides sp. (strain ATCC BAA-499 / JS614).